The sequence spans 886 residues: Vam6/Vps39-like protein (886 aa).

Positions 15–294 constitute a CNH domain; sequence PLQIDCLAAW…RFITSGGSNI (280 aa). The stretch at 573–750 is one CHCR repeat; the sequence is FTEDLPEVES…LLRMYLSPPS (178 aa).

This sequence belongs to the VAM6/VPS39 family. Homooligomer. Interacts with TGFBR2 and, less efficiently, with TGFBR1; interaction with TGFBR2 is independent of the receptor kinase activity and of the presence of TGF-beta. Also interacts with ACVR2B, but not with BMPR2. Interacts with SMAD4, preferentially following TGF-beta treatment. Does not interact with SAMD2 or SMAD3. Component of the homotypic fusion and vacuole protein sorting (HOPS) complex; the core of which composed of the class C Vps proteins VPS11, VPS16, VPS18 and VPS33A, is associated with VPS39 and VPS41. Interacts with PLEKHM2; involved in VPS39 recruitment to ARL8B-containing lysosomes. Associates with adapter protein complex 3 (AP-3) and clathrin:AP-3 complexes. Interacts with STX17; this interaction is increased in the absence of TMEM39A. Interacts with RAB7, RAB2A and RAB2B. Interacts with RAB2A (GTP-bound); the interaction contributes to obtaining a functional HOPS complex that promotes autophagosome-lysosome membrane fusion driven by STX17-SNAP29-VAMP8. Interacts with RAB39A (GTP-bound) and RAB39B (GTP-bound); interaction with RAB39A contributes to obtaining a functional HOPS complex. In terms of assembly, (Microbial infection) Interacts with SARS coronavirus-2/SARS-CoV-2 ORF3A protein; the interaction is direct and sequestrates VPS39, thereby preventing HOPS complex from interacting with the autophagosomal SNARE protein STX17. ORF3A enhances the interaction of VPS39 with VPS11 and VPS18, while its interaction with the VPS16:VPS33A module is attenuated. Widely expressed, with highest levels in heart, skeletal muscle, kidney, pancreas, brain, placenta and spleen.

The protein resides in the cytoplasm. It localises to the lysosome membrane. It is found in the late endosome membrane. Functionally, regulator of TGF-beta/activin signaling, inhibiting SMAD3- and activating SMAD2-dependent transcription. Acts by interfering with SMAD3/SMAD4 complex formation, this would lead to inhibition of SMAD3-dependent transcription and relieve SMAD3 inhibition of SMAD2-dependent promoters, thus increasing SMAD2-dependent transcription. Does not affect TGF-beta-induced SMAD2 or SMAD3 phosphorylation, nor SMAD2/SMAD4 complex formation. In terms of biological role, plays a role in vesicle-mediated protein trafficking to lysosomal compartments including the endocytic membrane transport and autophagic pathways. Acts as a component of the HOPS endosomal tethering complex. This complex is proposed to be involved in the Rab5-to-Rab7 endosome conversion probably implicating MON1A/B, and via binding SNAREs and SNARE complexes to mediate tethering and docking events during SNARE-mediated membrane fusion. The HOPS complex is proposed to be recruited to Rab7 on the late endosomal membrane and to regulate late endocytic, phagocytic and autophagic traffic towards lysosomes. Involved in homotypic vesicle fusions between late endosomes and in heterotypic fusions between late endosomes and lysosomes. Required for fusion of endosomes and autophagosomes with lysosomes. The polypeptide is Vam6/Vps39-like protein (Homo sapiens (Human)).